The following is an 860-amino-acid chain: SH2 domain-containing protein 3C (860 aa).

The residue at position 22 (S22) is a Phosphoserine. 2 disordered regions span residues 51–117 (EATQ…PPGL) and 130–180 (PLED…PEAG). Over residues 162 to 175 (ERPPRDVHSERAAG) the composition is skewed to basic and acidic residues. Positions 220-319 (WYHGRIPREV…QSGAIIYCPV (100 aa)) constitute an SH2 domain. Y278 and Y283 each carry phosphotyrosine. The segment at 335-537 (GQGSSKPASP…LSENGAPEGD (203 aa)) is disordered. S359 is modified (phosphoserine). Composition is skewed to low complexity over residues 405–420 (SPMSPISESPSSPAYS), 427–443 (AAPAAPSATALPASPVA), and 479–490 (SPSPSLSSYSDP). S440 bears the Phosphoserine mark. Residues 586–854 (DARTLARHVT…TALSHKLEPA (269 aa)) enclose the Ras-GEF domain. Y793 bears the Phosphotyrosine mark.

As to quaternary structure, component of a complex comprised of SH2D3C, BCAR1/CAS, and CRK. Within the complex, interacts with CRK and (via C-terminus) with BCAR1/CAS (via C-terminus). Interacts with NEDD9/HEF1. Interacts with EPHB2. In terms of assembly, interacts with NEDD9/HEF1. Interacts with BCAR1/CAS. Interacts with PTK2B. Interacts (via C-terminus) with BCAR1/CAS (via C-terminus). Interacts with IGF1. Post-translationally, phosphorylated by MAPK/ERK upon T-cell receptor stimulation in T-cells. As to expression, ubiquitously expressed.

The protein resides in the cytoplasm. The protein localises to the cell membrane. Its subcellular location is the cell projection. It is found in the axon. It localises to the ruffle membrane. Acts as an adapter protein that mediates cell signaling pathways involved in cellular functions such as cell adhesion and migration, tissue organization, and the regulation of the immune response. Plays a role in integrin-mediated cell adhesion through BCAR1-CRK-RAPGEF1 signaling and activation of the small GTPase RAP1. Promotes cell migration and invasion through the extracellular matrix. Required for marginal zone B-cell development and thymus-independent type 2 immune responses. Mediates migration and adhesion of B cells in the splenic marginal zone via promoting hyperphosphorylation of NEDD9/CASL. Plays a role in CXCL13-induced chemotaxis of B-cells. Plays a role in the migration of olfactory sensory neurons (OSNs) into the forebrain and the innervation of the olfactory bulb by the OSN axons during development. Required for the efficient tyrosine phosphorylation of BCAR1 in OSN axons. In terms of biological role, important regulator of chemokine-induced, integrin-mediated T lymphocyte adhesion and migration, acting upstream of RAP1. Required for tissue-specific adhesion of T lymphocytes to peripheral tissues. Required for basal and CXCL2 stimulated serine-threonine phosphorylation of NEDD9. May be involved in the regulation of T-cell receptor-mediated IL2 production through the activation of the JNK pathway in T-cells. Its function is as follows. May be involved in the BCAR1/CAS-mediated JNK activation pathway. This Homo sapiens (Human) protein is SH2 domain-containing protein 3C (SH2D3C).